A 173-amino-acid chain; its full sequence is MGTPCHFALFELQPNFRLDLEQLATRYRELARGVHPDRFADASEREQRLALEKSASLNEAYQTLKNPPKRARYLLAMNGGEVPIEVTVHDPDFLMQQMQWREELEDLQDEADVAGVAVFKRRLKTAQDELNESFAACWNDAAQREQAERLMRRMQFLDKLTYEVRQLEERLDD.

Residues 5–77 enclose the J domain; that stretch reads CHFALFELQP…PKRARYLLAM (73 aa).

This sequence belongs to the HscB family. Interacts with HscA and stimulates its ATPase activity.

In terms of biological role, co-chaperone involved in the maturation of iron-sulfur cluster-containing proteins. Seems to help targeting proteins to be folded toward HscA. The chain is Co-chaperone protein HscB homolog from Pseudomonas fluorescens (strain SBW25).